The sequence spans 147 residues: uncharacterized protein (147 aa).

2 4Fe-4S ferredoxin-type domains span residues 80–109 (WYPK…AENG) and 110–141 (KVVV…FPDE). The [4Fe-4S] cluster site is built by C89, C92, C95, C99, C119, C123, C126, and C130.

It depends on [4Fe-4S] cluster as a cofactor.

This is an uncharacterized protein from Methanocaldococcus jannaschii (strain ATCC 43067 / DSM 2661 / JAL-1 / JCM 10045 / NBRC 100440) (Methanococcus jannaschii).